A 262-amino-acid chain; its full sequence is Polyamine aminopropyltransferase (262 aa).

Positions 1-249 constitute a PABS domain; that stretch reads MWITQEITPY…DIHRAAFALP (249 aa). Asn-29 provides a ligand contact to S-methyl-5'-thioadenosine. Asp-83 is a spermidine binding site. Catalysis depends on Asp-155, which acts as the Proton acceptor.

Homodimer.

It localises to the cytoplasm. The enzyme catalyses S-adenosyl 3-(methylsulfanyl)propylamine + putrescine = S-methyl-5'-thioadenosine + spermidine + H(+). It participates in amine and polyamine biosynthesis; spermidine biosynthesis; spermidine from putrescine: step 1/1. Its activity is regulated as follows. Inhibited by methylglyoxal bis(cyclopentylamidinohydrazone)(MGBCP). Its function is as follows. Involved in the cell growth and proliferation. Catalyzes the irreversible transfer of a propylamine group from the amino donor S-adenosylmethioninamine (decarboxy-AdoMet) to putrescine (1,4-diaminobutane) to yield spermidine. Spermidine cannot be used as an aminopropyl acceptor. This is Polyamine aminopropyltransferase from Helicobacter pylori (strain ATCC 700392 / 26695) (Campylobacter pylori).